The primary structure comprises 355 residues: N-acylethanolamine-hydrolyzing acid amidase (355 aa).

The N-terminal stretch at 1 to 17 (MLLLQIILLLLPVICSA) is a signal peptide. Cysteine 122 (nucleophile) is an active-site residue. N-linked (GlcNAc...) asparagine glycans are attached at residues asparagine 150, asparagine 160, and asparagine 328.

Belongs to the acid ceramidase family. As to quaternary structure, heterodimer of an alpha and a beta subunit, produced by autocatalytic cleavage. Post-translationally, N-glycosylated. Autoproteolytic cleavage at pH 4.5 gives rise to the alpha and beta subunit. Cleavage gives rise to a conformation change that activates the enzyme. The same catalytic Cys residue mediates the autoproteolytic cleavage and subsequent hydrolysis of lipid substrates.

It is found in the lysosome. The protein localises to the membrane. The catalysed reaction is N-hexadecanoylethanolamine + H2O = ethanolamine + hexadecanoate. It carries out the reaction an N-(long-chain fatty acyl)ethanolamine + H2O = a long-chain fatty acid + ethanolamine. The protein operates within lipid metabolism; fatty acid metabolism. Functionally, degrades bioactive fatty acid amides, such as N-palmitoylethanolamine, to ethanolamine and free fatty acids. This is N-acylethanolamine-hydrolyzing acid amidase from Caenorhabditis elegans.